A 45-amino-acid polypeptide reads, in one-letter code: Movement protein p5 (45 aa).

The helical transmembrane segment at 8 to 28 (ILLLVVDFVFVIILLLVLTFV) threads the bilayer.

The protein resides in the host rough endoplasmic reticulum membrane. Its function is as follows. Transports viral genome to neighboring plant cells directly through plasmosdesmata, without any budding. The movement protein allows efficient cell to cell propagation, by bypassing the host cell wall barrier. Two movement proteins, p6, Hsp70h and three structural proteins, CP, CPm, and P64 are essential for cell-cell movement. Also plays a role in virion formation. Together with CPm and p64, encapsidates the 5'-terminal portion of the viral genome. This chain is Movement protein p5, found in Grapevine leafroll-associated virus 3 (isolate United States/NY1) (GLRaV-3).